A 95-amino-acid chain; its full sequence is Aspartyl/glutamyl-tRNA(Asn/Gln) amidotransferase subunit C (95 aa).

Belongs to the GatC family. Heterotrimer of A, B and C subunits.

The enzyme catalyses L-glutamyl-tRNA(Gln) + L-glutamine + ATP + H2O = L-glutaminyl-tRNA(Gln) + L-glutamate + ADP + phosphate + H(+). The catalysed reaction is L-aspartyl-tRNA(Asn) + L-glutamine + ATP + H2O = L-asparaginyl-tRNA(Asn) + L-glutamate + ADP + phosphate + 2 H(+). Allows the formation of correctly charged Asn-tRNA(Asn) or Gln-tRNA(Gln) through the transamidation of misacylated Asp-tRNA(Asn) or Glu-tRNA(Gln) in organisms which lack either or both of asparaginyl-tRNA or glutaminyl-tRNA synthetases. The reaction takes place in the presence of glutamine and ATP through an activated phospho-Asp-tRNA(Asn) or phospho-Glu-tRNA(Gln). This is Aspartyl/glutamyl-tRNA(Asn/Gln) amidotransferase subunit C from Beijerinckia indica subsp. indica (strain ATCC 9039 / DSM 1715 / NCIMB 8712).